Reading from the N-terminus, the 335-residue chain is Holliday junction branch migration complex subunit RuvB (335 aa).

Residues 4–184 (ADRIISGQAK…FGIVQRLEFY (181 aa)) form a large ATPase domain (RuvB-L) region. Residues I23, R24, G65, K68, T69, T70, 131-133 (EDY), R174, Y184, and R221 each bind ATP. T69 serves as a coordination point for Mg(2+). Residues 185–255 (SVEDLTSIVA…VAKQALSMLD (71 aa)) form a small ATPAse domain (RuvB-S) region. Positions 258-335 (DAGFDYLDRK…RHFGLQKLSD (78 aa)) are head domain (RuvB-H). Residues R294, R313, and R318 each coordinate DNA.

Belongs to the RuvB family. Homohexamer. Forms an RuvA(8)-RuvB(12)-Holliday junction (HJ) complex. HJ DNA is sandwiched between 2 RuvA tetramers; dsDNA enters through RuvA and exits via RuvB. An RuvB hexamer assembles on each DNA strand where it exits the tetramer. Each RuvB hexamer is contacted by two RuvA subunits (via domain III) on 2 adjacent RuvB subunits; this complex drives branch migration. In the full resolvosome a probable DNA-RuvA(4)-RuvB(12)-RuvC(2) complex forms which resolves the HJ.

Its subcellular location is the cytoplasm. The enzyme catalyses ATP + H2O = ADP + phosphate + H(+). Its function is as follows. The RuvA-RuvB-RuvC complex processes Holliday junction (HJ) DNA during genetic recombination and DNA repair, while the RuvA-RuvB complex plays an important role in the rescue of blocked DNA replication forks via replication fork reversal (RFR). RuvA specifically binds to HJ cruciform DNA, conferring on it an open structure. The RuvB hexamer acts as an ATP-dependent pump, pulling dsDNA into and through the RuvAB complex. RuvB forms 2 homohexamers on either side of HJ DNA bound by 1 or 2 RuvA tetramers; 4 subunits per hexamer contact DNA at a time. Coordinated motions by a converter formed by DNA-disengaged RuvB subunits stimulates ATP hydrolysis and nucleotide exchange. Immobilization of the converter enables RuvB to convert the ATP-contained energy into a lever motion, pulling 2 nucleotides of DNA out of the RuvA tetramer per ATP hydrolyzed, thus driving DNA branch migration. The RuvB motors rotate together with the DNA substrate, which together with the progressing nucleotide cycle form the mechanistic basis for DNA recombination by continuous HJ branch migration. Branch migration allows RuvC to scan DNA until it finds its consensus sequence, where it cleaves and resolves cruciform DNA. The polypeptide is Holliday junction branch migration complex subunit RuvB (Haemophilus influenzae (strain 86-028NP)).